The sequence spans 519 residues: Light-independent protochlorophyllide reductase subunit B (519 aa).

A [4Fe-4S] cluster-binding site is contributed by Asp36. Asp274 functions as the Proton donor in the catalytic mechanism. A substrate-binding site is contributed by Gly409–Leu410. The interval Asp426–Ser465 is disordered. Basic and acidic residues predominate over residues Arg445–Pro456.

Belongs to the ChlB/BchB/BchZ family. As to quaternary structure, protochlorophyllide reductase is composed of three subunits; BchL, BchN and BchB. Forms a heterotetramer of two BchB and two BchN subunits. [4Fe-4S] cluster is required as a cofactor.

It carries out the reaction chlorophyllide a + oxidized 2[4Fe-4S]-[ferredoxin] + 2 ADP + 2 phosphate = protochlorophyllide a + reduced 2[4Fe-4S]-[ferredoxin] + 2 ATP + 2 H2O. It participates in porphyrin-containing compound metabolism; bacteriochlorophyll biosynthesis (light-independent). Functionally, component of the dark-operative protochlorophyllide reductase (DPOR) that uses Mg-ATP and reduced ferredoxin to reduce ring D of protochlorophyllide (Pchlide) to form chlorophyllide a (Chlide). This reaction is light-independent. The NB-protein (BchN-BchB) is the catalytic component of the complex. The protein is Light-independent protochlorophyllide reductase subunit B of Jannaschia sp. (strain CCS1).